The primary structure comprises 252 residues: Probable anguibactin biosynthesis thioesterase AngT (252 aa).

Catalysis depends on residues Ser92 and His229.

Belongs to the thioesterase family.

It functions in the pathway siderophore biosynthesis; anguibactin biosynthesis. In terms of biological role, probable thioesterase. Involved in anguibactin production, but is not essential for virulence or iron transport gene expression. The protein is Probable anguibactin biosynthesis thioesterase AngT (angT) of Vibrio anguillarum (strain ATCC 68554 / 775) (Listonella anguillarum).